A 674-amino-acid polypeptide reads, in one-letter code: DNA mismatch repair protein MutL (674 aa).

The protein belongs to the DNA mismatch repair MutL/HexB family.

This protein is involved in the repair of mismatches in DNA. It is required for dam-dependent methyl-directed DNA mismatch repair. May act as a 'molecular matchmaker', a protein that promotes the formation of a stable complex between two or more DNA-binding proteins in an ATP-dependent manner without itself being part of a final effector complex. In Clostridium perfringens (strain 13 / Type A), this protein is DNA mismatch repair protein MutL.